The sequence spans 436 residues: 3-ketoacyl-CoA thiolase (436 aa).

Cys99 serves as the catalytic Acyl-thioester intermediate. Active-site proton acceptor residues include His392 and Cys422.

This sequence belongs to the thiolase-like superfamily. Thiolase family. Heterotetramer of two alpha chains (FadJ) and two beta chains (FadI).

It localises to the cytoplasm. It catalyses the reaction an acyl-CoA + acetyl-CoA = a 3-oxoacyl-CoA + CoA. It participates in lipid metabolism; fatty acid beta-oxidation. Catalyzes the final step of fatty acid oxidation in which acetyl-CoA is released and the CoA ester of a fatty acid two carbons shorter is formed. The polypeptide is 3-ketoacyl-CoA thiolase (Shewanella loihica (strain ATCC BAA-1088 / PV-4)).